The chain runs to 151 residues: Small ribosomal subunit protein uS15 (151 aa).

It belongs to the universal ribosomal protein uS15 family. As to quaternary structure, component of the small ribosomal subunit. Part of the small subunit (SSU) processome, composed of more than 70 proteins and the RNA chaperone small nucleolar RNA (snoRNA) U3.

The protein resides in the cytoplasm. It localises to the nucleus. It is found in the nucleolus. Its function is as follows. Component of the small ribosomal subunit. The ribosome is a large ribonucleoprotein complex responsible for the synthesis of proteins in the cell. Part of the small subunit (SSU) processome, first precursor of the small eukaryotic ribosomal subunit. During the assembly of the SSU processome in the nucleolus, many ribosome biogenesis factors, an RNA chaperone and ribosomal proteins associate with the nascent pre-rRNA and work in concert to generate RNA folding, modifications, rearrangements and cleavage as well as targeted degradation of pre-ribosomal RNA by the RNA exosome. In Caenorhabditis elegans, this protein is Small ribosomal subunit protein uS15 (rps-13).